Reading from the N-terminus, the 148-residue chain is 3-hydroxyacyl-[acyl-carrier-protein] dehydratase FabZ (148 aa).

H48 is an active-site residue.

The protein belongs to the thioester dehydratase family. FabZ subfamily.

It localises to the cytoplasm. It carries out the reaction a (3R)-hydroxyacyl-[ACP] = a (2E)-enoyl-[ACP] + H2O. In terms of biological role, involved in unsaturated fatty acids biosynthesis. Catalyzes the dehydration of short chain beta-hydroxyacyl-ACPs and long chain saturated and unsaturated beta-hydroxyacyl-ACPs. The polypeptide is 3-hydroxyacyl-[acyl-carrier-protein] dehydratase FabZ (Campylobacter curvus (strain 525.92)).